An 800-amino-acid chain; its full sequence is Phenylalanine--tRNA ligase beta subunit (800 aa).

The tRNA-binding domain occupies 39 to 154 (TKDIKNLVVG…ESQVPGTDAL (116 aa)). The B5 domain occupies 408–483 (AFITPIDITA…RIYGYDDIPS (76 aa)). Positions 461, 467, 470, and 471 each coordinate Mg(2+). The FDX-ACB domain occupies 708 to 800 (PRFPGMSRDI…ALIEQGAVIR (93 aa)).

Belongs to the phenylalanyl-tRNA synthetase beta subunit family. Type 1 subfamily. As to quaternary structure, tetramer of two alpha and two beta subunits. Mg(2+) serves as cofactor.

It localises to the cytoplasm. It carries out the reaction tRNA(Phe) + L-phenylalanine + ATP = L-phenylalanyl-tRNA(Phe) + AMP + diphosphate + H(+). The polypeptide is Phenylalanine--tRNA ligase beta subunit (Staphylococcus aureus (strain MRSA252)).